The sequence spans 306 residues: tRNA dimethylallyltransferase (306 aa).

14–21 (GPTAAGKS) is an ATP binding site. Residue 16-21 (TAAGKS) participates in substrate binding. Positions 39-42 (DSRL) are interaction with substrate tRNA.

This sequence belongs to the IPP transferase family. Monomer. Mg(2+) is required as a cofactor.

The enzyme catalyses adenosine(37) in tRNA + dimethylallyl diphosphate = N(6)-dimethylallyladenosine(37) in tRNA + diphosphate. Functionally, catalyzes the transfer of a dimethylallyl group onto the adenine at position 37 in tRNAs that read codons beginning with uridine, leading to the formation of N6-(dimethylallyl)adenosine (i(6)A). The sequence is that of tRNA dimethylallyltransferase from Synechococcus sp. (strain ATCC 27144 / PCC 6301 / SAUG 1402/1) (Anacystis nidulans).